A 523-amino-acid chain; its full sequence is Amino acid transporter protein 6 (523 aa).

Residues methionine 1–lysine 19 lie on the Cytoplasmic side of the membrane. The helical transmembrane segment at methionine 20–isoleucine 40 threads the bilayer. At threonine 41 to serine 51 the chain is on the extracellular side. The chain crosses the membrane as a helical span at residues valine 52 to cysteine 72. Topologically, residues tyrosine 73 to aspartate 86 are cytoplasmic. The chain crosses the membrane as a helical span at residues phenylalanine 87–cysteine 107. The Extracellular segment spans residues threonine 108 to leucine 145. Residues leucine 146–valine 166 traverse the membrane as a helical segment. At glutamine 167–alanine 173 the chain is on the cytoplasmic side. Residues serine 174 to phenylalanine 194 form a helical membrane-spanning segment. Over lysine 195 to proline 214 the chain is Extracellular. Residues phenylalanine 215 to glycine 235 traverse the membrane as a helical segment. At alanine 236–serine 249 the chain is on the cytoplasmic side. Residues isoleucine 250–isoleucine 270 form a helical membrane-spanning segment. At valine 271–lysine 290 the chain is on the extracellular side. Asparagine 289 is a glycosylation site (N-linked (GlcNAc...) asparagine). A helical transmembrane segment spans residues threonine 291–leucine 311. The Cytoplasmic segment spans residues asparagine 312–alanine 348. A helical membrane pass occupies residues leucine 349–isoleucine 369. Residues asparagine 370–leucine 404 are Extracellular-facing. The helical transmembrane segment at proline 405 to isoleucine 425 threads the bilayer. Residues aspartate 426–lysine 429 lie on the Cytoplasmic side of the membrane. A helical membrane pass occupies residues serine 430–tryptophan 450. At aspartate 451–methionine 523 the chain is on the extracellular side. An N-linked (GlcNAc...) asparagine glycan is attached at asparagine 462. The PDZ-binding motif signature appears at threonine 521–methionine 523.

This sequence belongs to the amino acid-polyamine-organocation (APC) superfamily. As to quaternary structure, interacts (via PDZ-binding motif) with nfrl-1 (via PDZ 2 domain); the interaction with nrfl-1 is required to sequester aat-6 to the apical cell membrane of intestinal cells. Expressed at the apical cell membrane of intestinal cells.

It is found in the apical cell membrane. Functionally, amino acid transporter that mediates the uptake of the L-enantiomers of various amino acids, including L-glutamate. May play a role in promoting fertility. The polypeptide is Amino acid transporter protein 6 (Caenorhabditis elegans).